The primary structure comprises 872 residues: N-acetyltransferase eso1 (872 aa).

Positions 1–591 (MELGKSKFSW…KQVKPKTYGR (591 aa)) are polymerase type-Y. The UmuC domain occupies 29–285 (VAHIDQDAFY…LKITDIRMLG (257 aa)). The UBZ3-type zinc-finger motif lies at 533–567 (SADETYTCEECEQKITLSERNEHEDYHIALSISRK). Zn(2+) is bound by residues Cys-540, Cys-543, His-555, and His-559. The disordered stretch occupies residues 569–602 (RYNNLVPPSHDKPKQVKPKTYGRKTGSKHYAPLS). The span at 583–595 (QVKPKTYGRKTGS) shows a compositional bias: basic residues. The interval 592–872 (KTGSKHYAPL…KSLRYAVYES (281 aa)) is acetyltransferase. A CCHH-type zinc finger spans residues 653–677 (VTCSECSMEYNSTSEEDILLHSRFH).

This sequence in the C-terminal section; belongs to the acetyltransferase family. ECO subfamily. The protein in the N-terminal section; belongs to the DNA polymerase type-Y family. Interacts with pds5.

Its subcellular location is the nucleus. Probable acetyltransferase required for the establishment of sister chromatid cohesion and couple the processes of cohesion and DNA replication to ensure that only sister chromatids become paired together. In contrast to the structural cohesins, the deposition and establishment factors are required only during S phase. The relevance of acetyltransferase function remains unclear. The sequence is that of N-acetyltransferase eso1 (eso1) from Schizosaccharomyces pombe (strain 972 / ATCC 24843) (Fission yeast).